The primary structure comprises 387 residues: Cytochrome b (387 aa).

4 helical membrane-spanning segments follow: residues 32-52 (FGSLLACVLVIQIVIGILLAC), 76-98 (FLLRAFHANGASFFFIFLYLHIG), 113-133 (TWNIGVIIFLLTIITAFLGYC), and 179-199 (FFSLHYLMPFVIAALSVMHLI). Heme b contacts are provided by His-82 and His-96. 2 residues coordinate heme b: His-183 and His-197. Residue His-202 participates in a ubiquinone binding. Transmembrane regions (helical) follow at residues 225 to 245 (YLIKDLITIFIFLIGINYMAF), 289 to 309 (QLGVIAMLLSILVLLLLPLLD), 321 to 341 (FGKFFFWTFVADFVILAWIGG), and 348 to 368 (FITIGAIATIFYFSYFFILIP).

Belongs to the cytochrome b family. Fungal cytochrome b-c1 complex contains 10 subunits; 3 respiratory subunits, 2 core proteins and 5 low-molecular weight proteins. Cytochrome b-c1 complex is a homodimer. Heme b is required as a cofactor.

Its subcellular location is the mitochondrion inner membrane. Functionally, component of the ubiquinol-cytochrome c reductase complex (complex III or cytochrome b-c1 complex) that is part of the mitochondrial respiratory chain. The b-c1 complex mediates electron transfer from ubiquinol to cytochrome c. Contributes to the generation of a proton gradient across the mitochondrial membrane that is then used for ATP synthesis. The chain is Cytochrome b (cob) from Schizosaccharomyces pombe (strain 972 / ATCC 24843) (Fission yeast).